We begin with the raw amino-acid sequence, 297 residues long: Ribosomal protein L11 methyltransferase (297 aa).

Residues Thr-139, Gly-164, Asp-186, and Asn-233 each coordinate S-adenosyl-L-methionine.

It belongs to the methyltransferase superfamily. PrmA family.

Its subcellular location is the cytoplasm. The catalysed reaction is L-lysyl-[protein] + 3 S-adenosyl-L-methionine = N(6),N(6),N(6)-trimethyl-L-lysyl-[protein] + 3 S-adenosyl-L-homocysteine + 3 H(+). In terms of biological role, methylates ribosomal protein L11. The chain is Ribosomal protein L11 methyltransferase from Trichodesmium erythraeum (strain IMS101).